We begin with the raw amino-acid sequence, 155 residues long: 3-hydroxyacyl-[acyl-carrier-protein] dehydratase FabZ (155 aa).

The active site involves H57.

Belongs to the thioester dehydratase family. FabZ subfamily.

Its subcellular location is the cytoplasm. The enzyme catalyses a (3R)-hydroxyacyl-[ACP] = a (2E)-enoyl-[ACP] + H2O. Functionally, involved in unsaturated fatty acids biosynthesis. Catalyzes the dehydration of short chain beta-hydroxyacyl-ACPs and long chain saturated and unsaturated beta-hydroxyacyl-ACPs. The polypeptide is 3-hydroxyacyl-[acyl-carrier-protein] dehydratase FabZ (Cereibacter sphaeroides (strain KD131 / KCTC 12085) (Rhodobacter sphaeroides)).